A 381-amino-acid polypeptide reads, in one-letter code: MSKRDFYEVLGVSRDASERDIKKAYKRLAMKFHPDRNQGDDSAADKFKEVKVAYEILTDAQKKAAYDQYGHAAFEQGGMGGGGYGGGGQGDFGDIFGDVFGDIFGGGRRGGGQARAQRGSDLRYNMELSLEEAVRGVSKEIEVPTLVECDICDGSGAKAGSSAQTCGTCHGHGQVQMRQGFFAVQQTCPTCNGKGKIIKDPCNSCHGQGRKQKTKTLNVKIPAGVDTGDRIRLSGEGEAGEHGAPAGDLYVQVHVKEHNIFERDGNNLYCEVPVSFSMAALGGEVEVPTLDGRVNLKVPEETQTGRMFRMRGKGVKGVRGGGVGDLIVKLVVETPVKLSSRQKELLREFEETCCGEAASKHKPKSEGFFSGVKNFFDDLTK.

In terms of domain architecture, J spans 5–70; the sequence is DFYEVLGVSR…QKKAAYDQYG (66 aa). Residues 136–214 form a CR-type zinc finger; sequence GVSKEIEVPT…CHGQGRKQKT (79 aa). C149, C152, C166, C169, C188, C191, C202, and C205 together coordinate Zn(2+). CXXCXGXG motif repeat units follow at residues 149 to 156, 166 to 173, 188 to 195, and 202 to 209; these read CDICDGSG, CGTCHGHG, CPTCNGKG, and CNSCHGQG.

It belongs to the DnaJ family. As to quaternary structure, homodimer. Zn(2+) is required as a cofactor.

The protein resides in the cytoplasm. Its function is as follows. Participates actively in the response to hyperosmotic and heat shock by preventing the aggregation of stress-denatured proteins and by disaggregating proteins, also in an autonomous, DnaK-independent fashion. Unfolded proteins bind initially to DnaJ; upon interaction with the DnaJ-bound protein, DnaK hydrolyzes its bound ATP, resulting in the formation of a stable complex. GrpE releases ADP from DnaK; ATP binding to DnaK triggers the release of the substrate protein, thus completing the reaction cycle. Several rounds of ATP-dependent interactions between DnaJ, DnaK and GrpE are required for fully efficient folding. Also involved, together with DnaK and GrpE, in the DNA replication of plasmids through activation of initiation proteins. The chain is Chaperone protein DnaJ from Vibrio atlanticus (strain LGP32) (Vibrio splendidus (strain Mel32)).